Consider the following 65-residue polypeptide: Large ribosomal subunit protein bL35 (65 aa).

It belongs to the bacterial ribosomal protein bL35 family.

The polypeptide is Large ribosomal subunit protein bL35 (Nitrosomonas europaea (strain ATCC 19718 / CIP 103999 / KCTC 2705 / NBRC 14298)).